Reading from the N-terminus, the 355-residue chain is S-adenosylmethionine:tRNA ribosyltransferase-isomerase (355 aa).

Belongs to the QueA family. Monomer.

Its subcellular location is the cytoplasm. It catalyses the reaction 7-aminomethyl-7-carbaguanosine(34) in tRNA + S-adenosyl-L-methionine = epoxyqueuosine(34) in tRNA + adenine + L-methionine + 2 H(+). Its pathway is tRNA modification; tRNA-queuosine biosynthesis. Transfers and isomerizes the ribose moiety from AdoMet to the 7-aminomethyl group of 7-deazaguanine (preQ1-tRNA) to give epoxyqueuosine (oQ-tRNA). This is S-adenosylmethionine:tRNA ribosyltransferase-isomerase from Burkholderia orbicola (strain MC0-3).